We begin with the raw amino-acid sequence, 483 residues long: Replication factor C large subunit (483 aa).

Residue 43 to 50 (GKPGIGKT) coordinates ATP. A compositionally biased stretch (basic and acidic residues) spans 417–442 (ELKKKKKEEDAKGKKARGSKKEKEPI). The disordered stretch occupies residues 417–483 (ELKKKKKEED…KSSQSTLFSF (67 aa)). A compositionally biased stretch (polar residues) spans 448 to 457 (SIDSFSSQEP).

Belongs to the activator 1 small subunits family. RfcL subfamily. Heteromultimer composed of small subunits (RfcS) and large subunits (RfcL).

Functionally, part of the RFC clamp loader complex which loads the PCNA sliding clamp onto DNA. This chain is Replication factor C large subunit, found in Methanospirillum hungatei JF-1 (strain ATCC 27890 / DSM 864 / NBRC 100397 / JF-1).